Reading from the N-terminus, the 61-residue chain is MARKALKIKAEKEPKFSTRKYTRCKICGRSRAVYRDFGICRLCLRELAHKGSIPGLKKASW.

Residues Cys24, Cys27, Cys40, and Cys43 each coordinate Zn(2+).

This sequence belongs to the universal ribosomal protein uS14 family. Zinc-binding uS14 subfamily. Part of the 30S ribosomal subunit. Contacts proteins S3 and S10. The cofactor is Zn(2+).

Its function is as follows. Binds 16S rRNA, required for the assembly of 30S particles and may also be responsible for determining the conformation of the 16S rRNA at the A site. The sequence is that of Small ribosomal subunit protein uS14 from Coprothermobacter proteolyticus (strain ATCC 35245 / DSM 5265 / OCM 4 / BT).